We begin with the raw amino-acid sequence, 302 residues long: Zinc transporter ZIP1 (302 aa).

At 1–6 (MEYLLQ) the chain is on the extracellular side. The helical transmembrane segment at 7 to 27 (VKIAALVGLLFLTLIFGFIPA) threads the bilayer. At 28-44 (RVKWFRDTDGTETHRTV) the chain is on the cytoplasmic side. A helical transmembrane segment spans residues 45–65 (LSLISCFAGGVFLSACFLDII). Over 66–80 (PDYLSDINTELHARQ) the chain is Extracellular. Residues 81 to 101 (LETSFPLPEFIMAAGFFTVLI) form a helical membrane-spanning segment. At 102–158 (LERIVLNCKEMRATHEERTTLIPERKSGHGHGHGDGPDPESSGHHVHVDFQAHSPFR) the chain is on the cytoplasmic side. The tract at residues 123–145 (IPERKSGHGHGHGDGPDPESSGH) is disordered. The helical transmembrane segment at 159-179 (SFMLFLSLSLHSIFEGLAIGL) threads the bilayer. Residues 180–185 (QTTDPK) are Extracellular-facing. A helical transmembrane segment spans residues 186-206 (VVEICIAILVHKSIIVFSLAV). Residues 207-216 (KLVQSAIPPL) lie on the Cytoplasmic side of the membrane. The chain crosses the membrane as a helical span at residues 217–237 (WVAAYIGVFALMSPVGIAIGI). The Extracellular portion of the chain corresponds to 238–251 (SVMEAQLAAGPLIQ). The chain crosses the membrane as a helical span at residues 252 to 272 (AILEGFAAGTFVYITFLEILP). The Cytoplasmic segment spans residues 273-281 (HELNSPGKQ). A helical transmembrane segment spans residues 282–302 (LLKVLFLLLGFSIMAALSFLG).

The protein belongs to the ZIP transporter (TC 2.A.5) family. In terms of tissue distribution, highest levels in ovary, lower levels in intestine and gill, barely detected in kidney.

The protein resides in the cell membrane. The protein localises to the endoplasmic reticulum membrane. It carries out the reaction Zn(2+)(in) = Zn(2+)(out). Transporter for the divalent cation Zn(2+). Mediates the influx of Zn(2+) into cells from extracellular space. The polypeptide is Zinc transporter ZIP1 (slc39a1) (Takifugu rubripes (Japanese pufferfish)).